Reading from the N-terminus, the 218-residue chain is UPF0711 protein C18orf21 homolog (218 aa).

Ser-126 is modified (phosphoserine). Low complexity predominate over residues 130-146 (ASAASKASPKTPKRAAA). Residues 130-192 (ASAASKASPK…NGSKRKKHFS (63 aa)) form a disordered region. Residue Thr-140 is modified to Phosphothreonine. The segment covering 147–156 (GSTNISQSVH) has biased composition (polar residues). A compositionally biased stretch (low complexity) spans 161–172 (RSPSSTVRTPTS). Positions 173 to 183 (GQSTPICSSRN) are enriched in polar residues.

This sequence belongs to the UPF0711 family.

This is UPF0711 protein C18orf21 homolog from Rattus norvegicus (Rat).